The sequence spans 608 residues: Zinc metalloproteinase-disintegrin-like agkihagin (608 aa).

The signal sequence occupies residues 1-20; sequence MIQVLLVTICLAAFPYQGSS. The propeptide occupies 21-189; that stretch reads IILESGNVND…KKASQSNLTP (169 aa). The Peptidase M12B domain maps to 199 to 395; that stretch reads KFVKLFLVAD…NMPQCILKKP (197 aa). Intrachain disulfides connect Cys310–Cys390, Cys350–Cys374, and Cys352–Cys357. Position 335 (His335) interacts with Zn(2+). The active site involves Glu336. Positions 339 and 345 each coordinate Zn(2+). The Disintegrin domain occupies 403 to 488; it reads PPVCGNYFVE…ADCTDRFQKN (86 aa). Val405, Asn408, Phe410, Glu412, Glu415, and Asp418 together coordinate Ca(2+). Cystine bridges form between Cys406-Cys435, Cys417-Cys430, Cys419-Cys425, Cys429-Cys452, Cys443-Cys449, Cys448-Cys474, Cys461-Cys481, Cys468-Cys499, Cys492-Cys504, Cys511-Cys561, Cys526-Cys570, Cys539-Cys549, Cys556-Cys596, and Cys590-Cys601. A D/ECD-tripeptide motif is present at residues 467–469; it reads ECD. Positions 469, 470, 472, 483, and 484 each coordinate Ca(2+). N-linked (GlcNAc...) asparagine glycosylation is present at Asn501.

This sequence belongs to the venom metalloproteinase (M12B) family. P-III subfamily. P-IIIc sub-subfamily. Homodimer; disulfide-linked. Zn(2+) serves as cofactor. Expressed by the venom gland.

The protein localises to the secreted. With respect to regulation, inhibited by EDTA and EGTA. Not inhibited by PMSF, antipain, pepstatin, and iodoacetamide. In terms of biological role, strongly inhibits the collagen-induced human platelet aggregation. Hydrolyzes the Aalpha-chain of fibrinogen (FGA), without cleavage of Bbeta- and gamma-chains. Induces apoptosis and strongly inhibits proliferation of endothelial cells as well as adhesion of the cells to extracellular matrix proteins. In Deinagkistrodon acutus (Hundred-pace snake), this protein is Zinc metalloproteinase-disintegrin-like agkihagin.